The primary structure comprises 417 residues: Cell division protein FtsA (417 aa).

This sequence belongs to the FtsA/MreB family. In terms of assembly, self-interacts. Interacts with FtsZ.

It localises to the cell inner membrane. Its function is as follows. Cell division protein that is involved in the assembly of the Z ring. May serve as a membrane anchor for the Z ring. The sequence is that of Cell division protein FtsA from Pseudomonas aeruginosa (strain ATCC 15692 / DSM 22644 / CIP 104116 / JCM 14847 / LMG 12228 / 1C / PRS 101 / PAO1).